Consider the following 407-residue polypeptide: Phosphopentomutase (407 aa).

Mn(2+)-binding residues include D11, D305, H310, D346, H347, and H358.

It belongs to the phosphopentomutase family. The cofactor is Mn(2+).

It localises to the cytoplasm. It carries out the reaction 2-deoxy-alpha-D-ribose 1-phosphate = 2-deoxy-D-ribose 5-phosphate. It catalyses the reaction alpha-D-ribose 1-phosphate = D-ribose 5-phosphate. Its pathway is carbohydrate degradation; 2-deoxy-D-ribose 1-phosphate degradation; D-glyceraldehyde 3-phosphate and acetaldehyde from 2-deoxy-alpha-D-ribose 1-phosphate: step 1/2. Its function is as follows. Isomerase that catalyzes the conversion of deoxy-ribose 1-phosphate (dRib-1-P) and ribose 1-phosphate (Rib-1-P) to deoxy-ribose 5-phosphate (dRib-5-P) and ribose 5-phosphate (Rib-5-P), respectively. The chain is Phosphopentomutase from Legionella pneumophila subsp. pneumophila (strain Philadelphia 1 / ATCC 33152 / DSM 7513).